Here is a 256-residue protein sequence, read N- to C-terminus: Low molecular mass lipoprotein PBMHP-6 (256 aa).

An N-terminal signal peptide occupies residues 1-19; the sequence is MRLTLFAFVLAVCALASNA.

This sequence belongs to the 30 kDa lipoprotein family.

It is found in the secreted. This is Low molecular mass lipoprotein PBMHP-6 from Bombyx mori (Silk moth).